A 331-amino-acid polypeptide reads, in one-letter code: Biotin synthase (331 aa).

In terms of domain architecture, Radical SAM core spans 52–281 (FFQNKVKLNM…TKEIRVSGGR (230 aa)). [4Fe-4S] cluster contacts are provided by Cys70, Cys74, and Cys77. Positions 114, 146, 206, and 276 each coordinate [2Fe-2S] cluster.

This sequence belongs to the radical SAM superfamily. Biotin synthase family. As to quaternary structure, homodimer. The cofactor is [4Fe-4S] cluster. It depends on [2Fe-2S] cluster as a cofactor.

It carries out the reaction (4R,5S)-dethiobiotin + (sulfur carrier)-SH + 2 reduced [2Fe-2S]-[ferredoxin] + 2 S-adenosyl-L-methionine = (sulfur carrier)-H + biotin + 2 5'-deoxyadenosine + 2 L-methionine + 2 oxidized [2Fe-2S]-[ferredoxin]. Its pathway is cofactor biosynthesis; biotin biosynthesis; biotin from 7,8-diaminononanoate: step 2/2. Functionally, catalyzes the conversion of dethiobiotin (DTB) to biotin by the insertion of a sulfur atom into dethiobiotin via a radical-based mechanism. The sequence is that of Biotin synthase from Bacillus pumilus (strain SAFR-032).